The following is a 146-amino-acid chain: Hemoglobin subunit beta-1 (146 aa).

The Globin domain occupies 2–146 (HWTAEEKQLI…VSHSLARRYH (145 aa)). Heme b contacts are provided by H63 and H92.

This sequence belongs to the globin family. The major hemoglobin component (HbIII) is a tetramer of two alpha-2 chains and two beta-1 chains. Red blood cells.

Its function is as follows. Involved in oxygen transport from the lung to the various peripheral tissues. This Varanus albigularis (White-throated monitor) protein is Hemoglobin subunit beta-1 (HBB1).